The sequence spans 378 residues: UPF0754 membrane protein BT9727_0767 (378 aa).

A run of 2 helical transmembrane segments spans residues M1–T21 and Y357–L377.

Belongs to the UPF0754 family.

The protein resides in the cell membrane. This chain is UPF0754 membrane protein BT9727_0767, found in Bacillus thuringiensis subsp. konkukian (strain 97-27).